A 328-amino-acid polypeptide reads, in one-letter code: UDP-N-acetylglucosamine transporter YEA4 (328 aa).

10 consecutive transmembrane segments (helical) span residues 1-21, 30-50, 66-86, 98-118, 122-142, 166-186, 198-218, 241-261, 274-294, and 298-318; these read MSFV…VISF, INLG…IQLP, HIPL…SVAN, IHII…WAVC, YSKL…VASL, SMFG…LSLL, WKET…LGYT, LPIA…FICI, LTLS…SVYI, and VLSV…GLYS.

The protein belongs to the nucleotide-sugar transporter family. SLC35A subfamily.

It is found in the golgi apparatus membrane. In terms of biological role, sugar transporter that specifically mediates the transport of UDP-N-acetylglucosamine (UDP-GlcNAc) from the cytosol into Golgi vesicles where glycosyltransferases function. The polypeptide is UDP-N-acetylglucosamine transporter YEA4 (YEA4) (Kluyveromyces lactis (strain ATCC 8585 / CBS 2359 / DSM 70799 / NBRC 1267 / NRRL Y-1140 / WM37) (Yeast)).